The sequence spans 259 residues: Leucine-rich repeat-containing protein 3B (259 aa).

An N-terminal signal peptide occupies residues 1–33 (MNLVDLWLSRSLSMCLLLQSFVLMILCFHSASM). Residues 34–64 (CPKGCLCSSSGGLNVTCSNANLKEIPRDLPP) form the LRRNT domain. Asn-47 is a glycosylation site (N-linked (GlcNAc...) asparagine). LRR repeat units lie at residues 65–86 (ETVL…IFKD), 89–110 (QLRV…AFKG), and 114–135 (TLQT…AFNN). Asn-94 is a glycosylation site (N-linked (GlcNAc...) asparagine). In terms of domain architecture, LRRCT spans 145–197 (NPWHCDCTLQQVLRSMASNHETAHNVICKTSVLDEHAGRPFLNAANDADLCNL). A helical membrane pass occupies residues 205–225 (AMLVTMFGWFTMVISYVVYYV).

Belongs to the LRRC3 family.

The protein localises to the membrane. The chain is Leucine-rich repeat-containing protein 3B (Lrrc3b) from Mus musculus (Mouse).